The chain runs to 217 residues: MTHSIWHEKIKSFLPEHYYGRINHFLDEAYASGLVYPQRENVFKALQVTPLEETKVLILGQDPYHGPKQAQGLSFSVPEEISAPPSLINILKELADDIGPRDHHDLSTWASQGVLLLNACLTVPAGQANGHAGLIWEPFTDAVIKVLNEKDSPVVFILWGAYARKKKAFITNSKHHIIESPHPSPLSSYRGFFGSKPFSRTNAILEKEGMTGVDWLK.

Residue Asp62 is the Proton acceptor of the active site.

The protein belongs to the uracil-DNA glycosylase (UDG) superfamily. UNG family.

It is found in the cytoplasm. The enzyme catalyses Hydrolyzes single-stranded DNA or mismatched double-stranded DNA and polynucleotides, releasing free uracil.. Excises uracil residues from the DNA which can arise as a result of misincorporation of dUMP residues by DNA polymerase or due to deamination of cytosine. The protein is Uracil-DNA glycosylase of Streptococcus pyogenes serotype M4 (strain MGAS10750).